A 1088-amino-acid polypeptide reads, in one-letter code: MESASSSLATSGRRRSSSGGGGGSWGSIGSAADPFDIPAKGAPVESLKKWRQAALVLNASRRFRYTLDLKREEQREEVISKIRAQAHVVRAAFRFKEAGQVHVQQKEVAAPPVDGALGFGIKEDQLTALTRDHNYSALQQYGGISGVARMLKTDTEKGISGDDSDLTARRNAFGSNTYPRKKGRSFLAFLWDACKDLTLIILMVAAAVSLALGITTEGIKEGWYDGASIAFAVLLVVVVTATSDYKQSLQFQNLNEEKQNIKLEVVRGGRRISVSIYDLVAGDVVPLKIGDQVPADGILISGHSLSVDESSMTGESKIVHKDQKSPFLMSGCKVADGYGTMLVTAVGINTEWGLLMASISEDSGEETPLQVRLNGVATFIGMVGLSVALAVLVVLLARYFTGHTYNPDGSVQYVKGKMGVGQTIRGIVGIFTVAVTIVVVAVPEGLPLAVTLTLAFSMRKMMRDKALVRRLSACETMGSATTICSDKTGTLTLNQMTVVEAYFGGKKMDPPDNVQVLSASISSLIVEGIAQNTSGSIFEPENGQDPEVTGSPTEKAILSWGLKLGMRFNDTRTKSSILHVFPFNSEKKRGGVAVHLGGSESEVHIHWKGAAEIILDSCKSWLAADGSKHSMTPEKISEFKKFIEDMAASSLRCVAFAYRTYEMVDVPSEDRRADWILPEDDLIMLGIVGIKDPCRPGVKDSVRLCAAAGIKVRMVTGDNLQTARAIALECGILSDPNVSEPVIIEGKAFRALSDLEREEAAEKISVMGRSSPNDKLLLVKALRKRGHVVAVTGDGTNDAPALHEADIGLSMGIQGTEVAKESSDIIILDDNFASVVRVVRWGRSVYANIQKFIQFQLTVNVAALIINVVAAVSSGNVPLNAVQLLWVNLIMDTLGALALATEPPTDHLMQRPPVGRREPLITNVMWRNLIIMALFQVIVLLTLNFRGTSLLQLKNDNQAHADKVKNTFIFNTFVLCQVFNEFNARKPDELNIFKGITGNHLFMAIVAITVVLQALIVEFLGKFTSTTRLTWQLWLVSIGLAFFSWPLAFVGKLIPVPERPLGDFFACCCPGSKQAADAKGDDADHSDV.

Low complexity predominate over residues 1–11; it reads MESASSSLATS. Residues 1–32 form a disordered region; it reads MESASSSLATSGRRRSSSGGGGGSWGSIGSAA. At 1–198 the chain is on the cytoplasmic side; sequence MESASSSLAT…FLWDACKDLT (198 aa). The helical transmembrane segment at 199-219 threads the bilayer; it reads LIILMVAAAVSLALGITTEGI. The Extracellular portion of the chain corresponds to 220–221; the sequence is KE. A helical transmembrane segment spans residues 222–242; that stretch reads GWYDGASIAFAVLLVVVVTAT. Residues 243-338 lie on the Cytoplasmic side of the membrane; that stretch reads SDYKQSLQFQ…MSGCKVADGY (96 aa). The chain crosses the membrane as a helical span at residues 339-359; the sequence is GTMLVTAVGINTEWGLLMASI. At 360–375 the chain is on the extracellular side; it reads SEDSGEETPLQVRLNG. A helical transmembrane segment spans residues 376–396; it reads VATFIGMVGLSVALAVLVVLL. The Cytoplasmic portion of the chain corresponds to 397–425; sequence ARYFTGHTYNPDGSVQYVKGKMGVGQTIR. Residues 426–446 traverse the membrane as a helical segment; sequence GIVGIFTVAVTIVVVAVPEGL. At 447–851 the chain is on the extracellular side; that stretch reads PLAVTLTLAF…GRSVYANIQK (405 aa). Asp486 acts as the 4-aspartylphosphate intermediate in catalysis. N-linked (GlcNAc...) asparagine glycans are attached at residues Asn532, Asn569, and Asn737. 2 residues coordinate Mg(2+): Asp794 and Asp798. The chain crosses the membrane as a helical span at residues 852–872; sequence FIQFQLTVNVAALIINVVAAV. The Cytoplasmic segment spans residues 873-880; it reads SSGNVPLN. A helical membrane pass occupies residues 881-901; that stretch reads AVQLLWVNLIMDTLGALALAT. Residues 902–919 are Extracellular-facing; it reads EPPTDHLMQRPPVGRREP. Residues 920–940 traverse the membrane as a helical segment; it reads LITNVMWRNLIIMALFQVIVL. Residues 941 to 1000 lie on the Cytoplasmic side of the membrane; sequence LTLNFRGTSLLQLKNDNQAHADKVKNTFIFNTFVLCQVFNEFNARKPDELNIFKGITGNH. The helical transmembrane segment at 1001 to 1021 threads the bilayer; the sequence is LFMAIVAITVVLQALIVEFLG. Residues 1022-1030 are Extracellular-facing; the sequence is KFTSTTRLT. The helical transmembrane segment at 1031-1051 threads the bilayer; that stretch reads WQLWLVSIGLAFFSWPLAFVG. The Cytoplasmic segment spans residues 1052 to 1088; it reads KLIPVPERPLGDFFACCCPGSKQAADAKGDDADHSDV.

Belongs to the cation transport ATPase (P-type) (TC 3.A.3) family. Type IIB subfamily. In terms of assembly, interacts with NOH1.

The protein localises to the cell membrane. It carries out the reaction Ca(2+)(in) + ATP + H2O = Ca(2+)(out) + ADP + phosphate + H(+). Activated by calmodulin. Its function is as follows. This magnesium-dependent enzyme catalyzes the hydrolysis of ATP coupled with the translocation of calcium from the cytosol out of the cell, into the endoplasmic reticulum, or into organelles. Involved in salt and drought stress tolerance. Involved in cold stress tolerance. In Oryza sativa subsp. japonica (Rice), this protein is Calcium-transporting ATPase 5, plasma membrane-type.